We begin with the raw amino-acid sequence, 146 residues long: Small ribosomal subunit protein uS9 (146 aa).

A Phosphoserine modification is found at Ser3. An N6-acetyllysine modification is found at Lys60.

This sequence belongs to the universal ribosomal protein uS9 family. Component of the small ribosomal subunit. Part of the small subunit (SSU) processome, composed of more than 70 proteins and the RNA chaperone small nucleolar RNA (snoRNA) U3.

Its subcellular location is the cytoplasm. It localises to the nucleus. The protein resides in the nucleolus. In terms of biological role, component of the small ribosomal subunit. The ribosome is a large ribonucleoprotein complex responsible for the synthesis of proteins in the cell. Part of the small subunit (SSU) processome, first precursor of the small eukaryotic ribosomal subunit. During the assembly of the SSU processome in the nucleolus, many ribosome biogenesis factors, an RNA chaperone and ribosomal proteins associate with the nascent pre-rRNA and work in concert to generate RNA folding, modifications, rearrangements and cleavage as well as targeted degradation of pre-ribosomal RNA by the RNA exosome. The protein is Small ribosomal subunit protein uS9 (RPS16) of Bos taurus (Bovine).